Consider the following 453-residue polypeptide: tRNA modification GTPase MnmE (453 aa).

(6S)-5-formyl-5,6,7,8-tetrahydrofolate is bound by residues Arg-22, Glu-79, and Lys-119. The 162-residue stretch at Gly-215–Gly-376 folds into the TrmE-type G domain. Asn-225 is a K(+) binding site. GTP contacts are provided by residues Asn-225–Ser-230, Thr-244–Thr-250, Asp-269–Gly-272, and Asn-334–Asp-337. Ser-229 is a Mg(2+) binding site. The K(+) site is built by Thr-244, Ile-246, and Thr-249. A Mg(2+)-binding site is contributed by Thr-250. Position 453 (Lys-453) interacts with (6S)-5-formyl-5,6,7,8-tetrahydrofolate.

The protein belongs to the TRAFAC class TrmE-Era-EngA-EngB-Septin-like GTPase superfamily. TrmE GTPase family. Homodimer. Heterotetramer of two MnmE and two MnmG subunits. Requires K(+) as cofactor.

It is found in the cytoplasm. Its function is as follows. Exhibits a very high intrinsic GTPase hydrolysis rate. Involved in the addition of a carboxymethylaminomethyl (cmnm) group at the wobble position (U34) of certain tRNAs, forming tRNA-cmnm(5)s(2)U34. This chain is tRNA modification GTPase MnmE, found in Vibrio cholerae serotype O1 (strain ATCC 39315 / El Tor Inaba N16961).